We begin with the raw amino-acid sequence, 68 residues long: Pleurocidin (68 aa).

An N-terminal signal peptide occupies residues 1-22; it reads MKFTATFLMMAIFVLMVEPGEC. The propeptide occupies 48-68; it reads GDKQELNKRAVDEDPNVIVFE.

Belongs to the pleurocidin family. Goblet cells.

Its subcellular location is the secreted. It localises to the membrane. In terms of biological role, antimicrobial peptide with potent activity against Gram-positive and Gram-negative bacteria. Activity against E.coli and B.subtilis. Weaker activity against L.mucor, s.marcescens and P.aeruginosa. May play a role in innate host defense. The polypeptide is Pleurocidin (ple1) (Pseudopleuronectes americanus (Winter flounder)).